The following is a 348-amino-acid chain: Bifunctional nitrilase/nitrile hydratase NIT4B (348 aa).

One can recognise a CN hydrolase domain in the interval 29–300; that stretch reads VRATVVQAST…EALISADLDL (272 aa). Glutamate 69 functions as the Proton acceptor in the catalytic mechanism. Catalysis depends on lysine 156, which acts as the Proton donor. The active-site Nucleophile is the cysteine 190.

This sequence belongs to the carbon-nitrogen hydrolase superfamily. Nitrilase family. As to expression, expressed in roots, stems, cotyledons, leaves and flowers.

The catalysed reaction is a nitrile + 2 H2O = a carboxylate + NH4(+). It carries out the reaction 3-cyano-L-alanine + 2 H2O = L-aspartate + NH4(+). Its function is as follows. Highly specific for beta-cyano-L-alanine (Ala(CN)). Low activity with 3-phenylpropionitrile (PPN). Not associated with auxin production but may be involved in cyanide detoxification. The chain is Bifunctional nitrilase/nitrile hydratase NIT4B (NIT4B) from Nicotiana tabacum (Common tobacco).